Consider the following 170-residue polypeptide: Large ribosomal subunit protein uL5 (170 aa).

It belongs to the universal ribosomal protein uL5 family. Part of the 50S ribosomal subunit; contacts the 5S rRNA and probably tRNA. Forms a bridge to the 30S subunit in the 70S ribosome.

Its function is as follows. This is one of the proteins that bind and probably mediate the attachment of the 5S RNA into the large ribosomal subunit, where it forms part of the central protuberance. In the 70S ribosome it contacts protein S13 of the 30S subunit (bridge B1b), connecting the 2 subunits; this bridge is implicated in subunit movement. May contact the P site tRNA; the 5S rRNA and some of its associated proteins might help stabilize positioning of ribosome-bound tRNAs. The protein is Large ribosomal subunit protein uL5 of Thermoplasma volcanium (strain ATCC 51530 / DSM 4299 / JCM 9571 / NBRC 15438 / GSS1).